Consider the following 481-residue polypeptide: Protein FAM83E (481 aa).

Residues 1–296 form a DUF1669 region; sequence MAASQLAALE…LYAASRPLSA (296 aa). The segment at 351 to 481 is disordered; it reads KQETPTTTGP…ASGSGSGRRR (131 aa). Residues 371-385 are compositionally biased toward low complexity; that stretch reads RTRTTSGPPTRPSRS. Composition is skewed to polar residues over residues 391–400 and 465–474; these read RLSQLSGSSD and NATTSDWASG.

Belongs to the FAM83 family. Directly interacts (via DUF1669) with CSNK1A1, CSNK1A1L, CSNK1D and CSNK1E. May interact with RAF1.

The protein localises to the cytoplasm. Its subcellular location is the perinuclear region. In terms of biological role, may play a role in MAPK signaling. This is Protein FAM83E from Mus musculus (Mouse).